We begin with the raw amino-acid sequence, 183 residues long: Segregation and condensation protein B (183 aa).

It belongs to the ScpB family. In terms of assembly, homodimer. Homodimerization may be required to stabilize the binding of ScpA to the Smc head domains. Component of a cohesin-like complex composed of ScpA, ScpB and the Smc homodimer, in which ScpA and ScpB bind to the head domain of Smc. The presence of the three proteins is required for the association of the complex with DNA.

Its subcellular location is the cytoplasm. Functionally, participates in chromosomal partition during cell division. May act via the formation of a condensin-like complex containing Smc and ScpA that pull DNA away from mid-cell into both cell halves. The protein is Segregation and condensation protein B of Streptococcus pyogenes serotype M12 (strain MGAS2096).